Here is a 65-residue protein sequence, read N- to C-terminus: Probable movement protein p8 (65 aa).

Residues 1-10 (MENTENVRSG) show a composition bias toward polar residues. The tract at residues 1 to 47 (MENTENVRSGRNQREYSKERQQEGGYKEVSKAAVRKEGDVKQDMGPS) is disordered. Over residues 12-42 (NQREYSKERQQEGGYKEVSKAAVRKEGDVKQ) the composition is skewed to basic and acidic residues.

This sequence belongs to the carmovirus/necrovirus/panicovirus movement protein p8 family.

Cell-to-cell movement. The chain is Probable movement protein p8 from Tobacco necrosis virus (strain D) (TNV-D).